A 463-amino-acid chain; its full sequence is Nitrogenase iron-molybdenum cofactor biosynthesis protein NifE (463 aa).

It belongs to the NifD/NifK/NifE/NifN family.

The protein operates within cofactor biosynthesis; Fe-Mo cofactor biosynthesis. This protein may play a role in the biosynthesis of the prosthetic group of nitrogenase (FeMo cofactor). This Methanosarcina barkeri protein is Nitrogenase iron-molybdenum cofactor biosynthesis protein NifE (nifE2).